The following is a 25-amino-acid chain: Cruzioseptin-13 (25 aa).

N25 carries the post-translational modification Asparagine amide.

Expressed by the skin glands.

Its subcellular location is the secreted. Has antimicrobial activity. In Cruziohyla calcarifer (Splendid leaf frog), this protein is Cruzioseptin-13.